Consider the following 156-residue polypeptide: S-ribosylhomocysteine lyase (156 aa).

Fe cation contacts are provided by His56, His60, and Cys123.

This sequence belongs to the LuxS family. Homodimer. Fe cation serves as cofactor.

The catalysed reaction is S-(5-deoxy-D-ribos-5-yl)-L-homocysteine = (S)-4,5-dihydroxypentane-2,3-dione + L-homocysteine. Functionally, involved in the synthesis of autoinducer 2 (AI-2) which is secreted by bacteria and is used to communicate both the cell density and the metabolic potential of the environment. The regulation of gene expression in response to changes in cell density is called quorum sensing. Catalyzes the transformation of S-ribosylhomocysteine (RHC) to homocysteine (HC) and 4,5-dihydroxy-2,3-pentadione (DPD). The polypeptide is S-ribosylhomocysteine lyase (Staphylococcus aureus (strain Mu3 / ATCC 700698)).